A 185-amino-acid chain; its full sequence is Large ribosomal subunit protein uL5 (185 aa).

It belongs to the universal ribosomal protein uL5 family. Part of the 50S ribosomal subunit; part of the 5S rRNA/L5/L18/L25 subcomplex. Contacts the 5S rRNA and the P site tRNA. Forms a bridge to the 30S subunit in the 70S ribosome.

This is one of the proteins that bind and probably mediate the attachment of the 5S RNA into the large ribosomal subunit, where it forms part of the central protuberance. In the 70S ribosome it contacts protein S13 of the 30S subunit (bridge B1b), connecting the 2 subunits; this bridge is implicated in subunit movement. Contacts the P site tRNA; the 5S rRNA and some of its associated proteins might help stabilize positioning of ribosome-bound tRNAs. The sequence is that of Large ribosomal subunit protein uL5 from Streptomyces coelicolor (strain ATCC BAA-471 / A3(2) / M145).